Consider the following 570-residue polypeptide: Urease subunit alpha 1 (570 aa).

One can recognise a Urease domain in the interval 131 to 570; the sequence is GGIDTHVHFI…VPMAQRYFLF (440 aa). Residues His136, His138, and Lys219 each contribute to the Ni(2+) site. Residue Lys219 is modified to N6-carboxylysine. Residue His221 coordinates substrate. Residues His248 and His274 each coordinate Ni(2+). Catalysis depends on His322, which acts as the Proton donor. A Ni(2+)-binding site is contributed by Asp362.

It belongs to the metallo-dependent hydrolases superfamily. Urease alpha subunit family. Heterotrimer of UreA (gamma), UreB (beta) and UreC (alpha) subunits. Three heterotrimers associate to form the active enzyme. Ni cation is required as a cofactor. Carboxylation allows a single lysine to coordinate two nickel ions.

It is found in the cytoplasm. It catalyses the reaction urea + 2 H2O + H(+) = hydrogencarbonate + 2 NH4(+). The protein operates within nitrogen metabolism; urea degradation; CO(2) and NH(3) from urea (urease route): step 1/1. In Brucella melitensis biotype 1 (strain ATCC 23456 / CCUG 17765 / NCTC 10094 / 16M), this protein is Urease subunit alpha 1.